The following is a 184-amino-acid chain: ESX-1 secretion-associated protein EspD (184 aa).

A disordered region spans residues 33–56 (IGVGSAATPDTGPDLDNAHGQAET).

Its subcellular location is the secreted. Required for ESX-1 function. Required for the maintenance of adequate cellular levels of both EspA and EspC. Facilitates EsxA secretion. The protein is ESX-1 secretion-associated protein EspD of Mycobacterium tuberculosis (strain CDC 1551 / Oshkosh).